The following is a 354-amino-acid chain: UDP-3-O-acylglucosamine N-acyltransferase (354 aa).

Residue H258 is the Proton acceptor of the active site.

Belongs to the transferase hexapeptide repeat family. LpxD subfamily. In terms of assembly, homotrimer.

It catalyses the reaction a UDP-3-O-[(3R)-3-hydroxyacyl]-alpha-D-glucosamine + a (3R)-hydroxyacyl-[ACP] = a UDP-2-N,3-O-bis[(3R)-3-hydroxyacyl]-alpha-D-glucosamine + holo-[ACP] + H(+). It functions in the pathway bacterial outer membrane biogenesis; LPS lipid A biosynthesis. Its function is as follows. Catalyzes the N-acylation of UDP-3-O-acylglucosamine using 3-hydroxyacyl-ACP as the acyl donor. Is involved in the biosynthesis of lipid A, a phosphorylated glycolipid that anchors the lipopolysaccharide to the outer membrane of the cell. The chain is UDP-3-O-acylglucosamine N-acyltransferase from Sinorhizobium medicae (strain WSM419) (Ensifer medicae).